We begin with the raw amino-acid sequence, 189 residues long: Calcium and integrin-binding family member 2 (189 aa).

EF-hand domains are found at residues 68–103 (RENP…FSEQ), 105–140 (PRDI…MTKN), and 146–181 (EHQQ…APDF). The Ca(2+) site is built by Asp118, Asp120, Asp122, Asp129, Asp159, Asp161, Asp163, Lys165, and Glu170.

As to quaternary structure, monomer. Homodimer.

The protein localises to the cytoplasm. In terms of biological role, calcium- and integrin-binding protein. Plays a role in intracellular calcium homeostasis. Critical for proper photoreceptor cell maintenance and function. Required for prevention of light-dependent retinal degeneration. This Drosophila melanogaster (Fruit fly) protein is Calcium and integrin-binding family member 2.